A 1006-amino-acid polypeptide reads, in one-letter code: GATA zinc finger domain-containing protein 7 (1006 aa).

Residues 55 to 70 (SSSNNFINNHHNNQSS) show a composition bias toward low complexity. Disordered stretches follow at residues 55–116 (SSSN…APNL), 128–248 (PFQN…DPFY), 381–499 (NAKK…PLST), 528–638 (STSG…SSNS), and 657–800 (YNSN…NYHD). The span at 71 to 86 (DIHSISQSTPNLSTLI) shows a compositional bias: polar residues. 2 stretches are compositionally biased toward low complexity: residues 87–110 (SSSSNNNNNNNNNNSPNYSMNSSS) and 128–158 (PFQNQQQQQPTSEVSTNSANTSSENTTCNNS). The span at 159-168 (PVSSSTNYIP) shows a compositional bias: polar residues. Low complexity predominate over residues 169 to 180 (NNSTSNVVLNSS). A compositionally biased stretch (polar residues) spans 181–190 (IPTTSPNVLS). Composition is skewed to low complexity over residues 205–241 (NNNNINNNNINNNINNNNNNNNNNNNNNNNNNNNNNN) and 388–410 (TNTNNNNNNNNNNNNNNNNNNNN). Positions 411–426 (IQQANVNTSPISTSTT) are enriched in polar residues. 2 stretches are compositionally biased toward low complexity: residues 427-456 (PNNNNNNQIQNQPQQIPQQQAQQQAQQQAQ) and 468-496 (SITPSISLTPTTVTSSSSTNSSGSIGASP). Residues 528–539 (STSGMLSTTNPY) are compositionally biased toward polar residues. A compositionally biased stretch (low complexity) spans 540–557 (THHSPNTSSTVSSSVTSP). The segment covering 558–589 (LINQYGTNPTLTNNHSFYGSLASNQNTGASDG) has biased composition (polar residues). Low complexity-rich tracts occupy residues 590–601 (NNNNNNNNNNNN) and 619–638 (SSNPLNNNHNSNNVYNSSNS). Residues 662–680 (GSGMTTPQSLGHSPSHNDY) show a composition bias toward polar residues. Low complexity-rich tracts occupy residues 681–706 (NSNNNNNNNNNNNSNNNNSNNSNSNN) and 713–785 (SNSS…SSNN). A GATA-type zinc finger spans residues 842–867 (CHNCGTKNTPEWRRGPSGPATLCNAC). The segment at 925–957 (NNASSSSSSSSSSSSSSSSSSSTSSYSSSSYNI) is disordered. A compositionally biased stretch (low complexity) spans 928 to 954 (SSSSSSSSSSSSSSSSSSSTSSYSSSS).

The chain is GATA zinc finger domain-containing protein 7 (gtaG) from Dictyostelium discoideum (Social amoeba).